Reading from the N-terminus, the 122-residue chain is Large ribosomal subunit protein uL18 (122 aa).

The protein belongs to the universal ribosomal protein uL18 family. As to quaternary structure, part of the 50S ribosomal subunit; part of the 5S rRNA/L5/L18/L25 subcomplex. Contacts the 5S and 23S rRNAs.

In terms of biological role, this is one of the proteins that bind and probably mediate the attachment of the 5S RNA into the large ribosomal subunit, where it forms part of the central protuberance. This chain is Large ribosomal subunit protein uL18, found in Dictyoglomus thermophilum (strain ATCC 35947 / DSM 3960 / H-6-12).